Reading from the N-terminus, the 40-residue chain is Photosystem II reaction center protein J (40 aa).

Residues 8–28 (IPLWLIGTVTGIPVIGLIGIF) form a helical membrane-spanning segment.

Belongs to the PsbJ family. PSII is composed of 1 copy each of membrane proteins PsbA, PsbB, PsbC, PsbD, PsbE, PsbF, PsbH, PsbI, PsbJ, PsbK, PsbL, PsbM, PsbT, PsbX, PsbY, PsbZ, Psb30/Ycf12, at least 3 peripheral proteins of the oxygen-evolving complex and a large number of cofactors. It forms dimeric complexes.

Its subcellular location is the plastid. The protein resides in the chloroplast thylakoid membrane. Functionally, one of the components of the core complex of photosystem II (PSII). PSII is a light-driven water:plastoquinone oxidoreductase that uses light energy to abstract electrons from H(2)O, generating O(2) and a proton gradient subsequently used for ATP formation. It consists of a core antenna complex that captures photons, and an electron transfer chain that converts photonic excitation into a charge separation. This Vitis vinifera (Grape) protein is Photosystem II reaction center protein J.